The following is a 262-amino-acid chain: Thiamine thiazole synthase (262 aa).

Residues A36, 55–56 (EK), G63, V127, and 154–156 (HVD) each bind NAD(+). Residues D156 and H171 each coordinate Fe cation. NAD(+) is bound at residue M224. R234 provides a ligand contact to glycine.

Belongs to the THI4 family. As to quaternary structure, homooctamer; tetramer of dimers. Fe(2+) is required as a cofactor.

The catalysed reaction is hydrogen sulfide + glycine + NAD(+) = ADP-5-ethyl-4-methylthiazole-2-carboxylate + nicotinamide + 3 H2O + H(+). Its pathway is cofactor biosynthesis; thiamine diphosphate biosynthesis. Its function is as follows. Involved in the biosynthesis of the thiazole moiety of thiamine. Catalyzes the conversion of NAD and glycine to adenosine diphosphate 5-(2-hydroxyethyl)-4-methylthiazole-2-carboxylate (ADT), an adenylated thiazole intermediate, using free sulfide as a source of sulfur. In Methanothrix thermoacetophila (strain DSM 6194 / JCM 14653 / NBRC 101360 / PT) (Methanosaeta thermophila), this protein is Thiamine thiazole synthase.